A 177-amino-acid chain; its full sequence is CASP-like protein 5A2 (177 aa).

Over 1-36 (MNASHPAVHPVGVPPAVAGQLPPRMRMKEIQGMPGT) the chain is Cytoplasmic. A helical membrane pass occupies residues 37 to 57 (IGGLLLRLGQFCFALVAFSIM). Topologically, residues 58–68 (VSIENFSTVTA) are extracellular. N62 carries N-linked (GlcNAc...) asparagine glycosylation. A helical transmembrane segment spans residues 69–89 (FCYLVAATVLQCLWSLALAII). Topologically, residues 90–103 (DGYALLVKRSLRNS) are cytoplasmic. A helical transmembrane segment spans residues 104 to 124 (LLVSLLVVGDGVTATLTFAAA). The Extracellular portion of the chain corresponds to 125–153 (CASAGITVLIGNDLRQCKENHCARYETAT). Residues 154 to 174 (ALAFLSWFMVSLSFILTFWLL) traverse the membrane as a helical segment. Residues 175–177 (ATR) lie on the Cytoplasmic side of the membrane.

This sequence belongs to the Casparian strip membrane proteins (CASP) family. In terms of assembly, homodimer and heterodimers.

Its subcellular location is the cell membrane. The sequence is that of CASP-like protein 5A2 from Ginkgo biloba (Ginkgo).